Consider the following 104-residue polypeptide: UPF0145 protein RD1_2695 (104 aa).

It belongs to the UPF0145 family.

The sequence is that of UPF0145 protein RD1_2695 from Roseobacter denitrificans (strain ATCC 33942 / OCh 114) (Erythrobacter sp. (strain OCh 114)).